The chain runs to 93 residues: Large ribosomal subunit protein uL23 (93 aa).

Belongs to the universal ribosomal protein uL23 family. In terms of assembly, part of the 50S ribosomal subunit. Contacts protein L29, and trigger factor when it is bound to the ribosome.

In terms of biological role, one of the early assembly proteins it binds 23S rRNA. One of the proteins that surrounds the polypeptide exit tunnel on the outside of the ribosome. Forms the main docking site for trigger factor binding to the ribosome. The protein is Large ribosomal subunit protein uL23 of Nitratiruptor sp. (strain SB155-2).